The primary structure comprises 2999 residues: MASTTAGRRWPPRRRSSRRGPTPRSRAPGAKLSAPEAGPPRRGPLPRGGAGRDTLLGAKATPSSPAARRYVTALGPPQPRGSTDSACAALPQPVPHEPREAAFRLAPASERGASVSPARIPRRRRRVPAMWDPRAARTPPRELAMLLCNKSNAFYNLGKWNEAFLAAKECLQWDPTYVKGYYRAGYSLLHLLQPYEAARMFFEGLRLLQRSPDQLQVPDFLVGIFTTMSSDSIVLQSFLPCFDHIFTTGFSTEVWQYVIQKLAKKGLWHSFLLLSAKKDRLPSNIHVSELSLQSLFEKYVFIGFYEKLEQVPKLVQWLVSIGANIETIGPNPLHALMRLCIQARESQLFRWVMDQKPEWKEHINHRDDAGCTVLHVAAAHFPGYTSRRQTEDVQMLLSFGADPTLLDGHARTVVDVLKRNKNFRAIDKINSHLEKLASSSKGLSEIPAGLVCDVNRDCATTFIKFLLERQKWPEVLLLLTRKVSGQPQLRNGVIKDCDLSDLDICTVIPHLSSWDQRKTQLLSRLIDSGALPEGLQDSQDRPLLMCLRHEDFDLAFLLLTKGADPRSVSLVEGDTPLHAALHIFLDINADIGFNFLSHLLDLFLSNPTEFYYLNPNVQDSNGNTLMHLLFQKGMLKRTKKLIDLLVKFDINFNLKNKAGKGVRHRIKKNDALLLAWNKALTESRRKNRQDPAAHLGRLSRSSAPGHTSQLKSQTSFKSLPCGTADTTLSKGLTESLPDVQVSRQEPEAVRTRSLRDRLVQDITVLIQQVELGMPLPEDSPQRDSPKVAAGTEGKKDKLQRTQRMGSSGCSGNNPVASEAGDGAQAGPGASQLVPVGNRLGVASDNQENWTMQEIQACLQDFDNMTWEIECTSEMLKKLSSKVMTKVIKKKIILAIQQLGNGEWTQGLQKRLKHSKGNIQLFEAKLDKGARMLWELAIDFSARCSENSEKIIGTERNTYSLEKSGRVYTEIIRIWDIVLDHCKLSDSIMAICSAYTRGLSCVLRKKLKGINKGQVSANMKIQKRIPRCYVEDTEAEKSLEQVDPEYFPPASAVETEYSIMKFHSFSTNMALNILNDMTATVEYPFRVGELEYAVIDLNPKPLEPIILIGRSGTGKTTCCLYRLWKKFHVYWEKAEQAGSPLLSKQILPKRRLEVEPGKEGPGREEEEHEEEEGSIKVETVDGIDEEQESEACAGGATVEPAGDSQGAEGCVPDHPHQLEHLHQIFVTKNHVLCQEVQRNFIELSKSTKATSHYKPLDPNVHKLQDLRDENFPLFVTSKQLLLLLDASLPKPFFLRNEDGSLKRTIVGWSTQEEFSIPSWEEDDEEVEADGNYNEEEKATETQTGDSDPRVYVTFEVFTNEIWPKMIKGRSSYNPALIWKEIKSFLKGSFEALSCPHGRLTEEAYKKLGRKRSPNFKEDRSEIYSLFCLYQQIRSQKGYFDEEDVLYNLSWRLSKLRVLPWSIHELYGDEIQDFTQAELALLMKCINDPNAMFLTGDTAQSIMKGVAFRFSDLLSLFHYASRSTVDKQCAVRKPKRIHQLYQNYRSHSGILNLASGVVDLLQFYFPESFDRLPRDSGLFDGPKPTLLDSCSVSDLAILLRGNKRKTQPIEFGAHQVILVANEKAKEKIPEELGLALVLTVYEAKGLEFDDVLLYNFFTDSEAYKEWKIISSFTPSSDSREEKWPLVDVPLERSSPSQARSLMVNPEMYKLLNGELKQLYTAITRARVNLWIFDENLEKRAPAFKYFIRRDFVQVVKTDENKDFDDSMFVKTSTPYEWIIQGDYYAKHQCWKVAAKCYQKGDALEKEKLALAHYTALNMKSKKFSPKEKELQYLELAKTYLECNEPKLSLKCLSYAKEFQLSAQLCERLGKIRDAAYFYKRSQCFQDAFRCFEQIQEFDLALRMYCQEELFEEAAIAVEKYEEMLKNKTFPIPKLSYSASQFYLEAAAKYLSANKSKEMMAVLSKLDVEDQLVFLKSRKCLAEAAELLNREGRREEAALLMKQHGCLLEAARLTANKDFQASCLLGVARFNVARDSDIEHTKVILREALDLCYQTSQLAGIAEAQFLLGIILRDFQKLRDAFIKFDMLNHSAGMVEALYEAASLCESEHQKVLALAPGGLEVLLNLVRALKNVTNNAEKEMVKSCFEFFGIFQVDAKYCQIAQNDPGPILRIILDLDLTLSEKKTKDHFLIVTDQVKLALNKHLLGRLCQITQILLGKAYPGICMRFIVGLKCEDEQCEDFHRPLRRCEAKCMVQSKMHLVAINGLLLEAKKVFPNVLAEDLEEMDYILSPDTYGLCKSFLNLLFPRHFHQRVLSENPMACKDILKPNYKSFRSFRCALKEYIHDLFQKESAHSRRESTDLWLSAMQAFLLSSSYPEDFEKLLRQEEDSYNRELKVLESDREDRGRGRGSRVRGIEGKFGMLVPNREDENVEKSYLCFIRLLESSMDQLYVRRNPGDYKRLFFRFMNVLIKRCKAPLVPSIINTVVLLELQFVHCGVVLTRLWKNAVLCLPKSYIALLHFWEFLYGKKDRESGEVFSIIQEYKPKDVTRAIRDFRFHLSYLVKVLCGYENMNFNVLLDSFSEIDYVISGEAERTLVLCLVMLVNAEEVLQPFCKPLLFRHFREIQTRLQLMSMDWPGQVPKRLLKVVQRVLVAASVKSVAEALQDLLFERDEEYLVDCHWRWDSVHTKGTVVRGLCHEEVRLNRLLCTGPMDQFADSEWDFGEDETHELDELAQEDRDNFLAAILSQKQRKALIQRKLRRVCLVVSLCIRWRRWVQTEHSREDREVRPGNFKRADVDRTQCDLCGVKFTRSPESYFSPGKAFEGTATEAVLISRAELEGRECRERISESYEQHIRLEGHRRQQAAYQKYLDFFHEKVDPIIEEGKVVVQGIEQSVWIRSHLGSKEQSHMLQRKVQEHIRRVSDLVEELYRRKAWAEAEEVMTQQVKILTLSVKNAQEWLKKTELRLKDEGTVQEEEYENEVEDFGELRPRRRAQKCGKQRKH.

Residues M1–C87 form a disordered region. Over residues R19 to E36 the composition is skewed to low complexity. TPR repeat units follow at residues A144–Y177 and K179–S211. 6 ANK repeats span residues E297 to T327, I328 to E361, A369 to L405, S538 to S567, E572 to F593, and N621 to L654. 4 disordered regions span residues R684–G722, M773–Q831, L1151–P1211, and W1318–D1344. Composition is skewed to polar residues over residues S699–K717 and T801–V815. Over residues L1151 to E1164 the composition is skewed to basic and acidic residues. Acidic residues predominate over residues W1318–A1327. TPR repeat units lie at residues P1772–K1805 and L1866–L1899.

As to expression, expressed only in the brain. Detected in the hippocampus, hypothalamus and cingulate gyrus.

The chain is TPR and ankyrin repeat-containing protein 1 (Trank1) from Mus musculus (Mouse).